Consider the following 666-residue polypeptide: Nuclear distribution protein nudE homolog 1 (666 aa).

Residues 14 to 195 adopt a coiled-coil conformation; it reads EEEIAHYREK…KDQLARAIAT (182 aa). 4 disordered regions span residues 40 to 64, 220 to 310, 369 to 388, and 397 to 666; these read EFQQ…KQQA, DDIN…SGIP, KRVT…PAPH, and DHNT…KVKK. The span at 251–274 shows a compositional bias: polar residues; sequence RSGTMSSIPVASPSTKRFSQQIPH. 2 stretches are compositionally biased toward low complexity: residues 275–287 and 372–383; these read SPSF…STTS and TSTTSTTSSTTT. Residues 400–410 are compositionally biased toward polar residues; sequence TTPTAQSQQFP. Low complexity-rich tracts occupy residues 449-465, 473-485, and 536-554; these read PTFR…LPSR, ASGS…SGTA, and SATP…STSN. Polar residues-rich tracts occupy residues 587–599 and 614–638; these read RQSL…TPTT and SSLS…SGRP.

It belongs to the nudE family. As to quaternary structure, self-associates. Interacts with PAC1.

The protein resides in the cytoplasm. Its subcellular location is the cytoskeleton. Functionally, required for nuclear migration. The protein is Nuclear distribution protein nudE homolog 1 (NDE1) of Cryptococcus neoformans var. neoformans serotype D (strain JEC21 / ATCC MYA-565) (Filobasidiella neoformans).